Consider the following 295-residue polypeptide: Tyrosine transport system permease protein (295 aa).

A run of 8 helical transmembrane segments spans residues 3 to 23, 57 to 77, 81 to 101, 122 to 142, 173 to 193, 200 to 220, 232 to 252, and 256 to 276; these read GIISVMTQSLILSIMALGVYI, VVATLMAILCGCTAGLVTGIL, FKISNLLSGILVMGMLYSINL, ISPIVLALAFVFICKILLDLF, ILGLMISNGLIALSGSLMAQF, NMGIGTLVLGIASIIIGITLF, IIVGSFIYQFTIYFAMSLGML, and LKLITAIVIIAFLATGNLNIS.

The protein belongs to the binding-protein-dependent transport system permease family. As to quaternary structure, the complex is probably composed of two ATP-binding proteins (CDR20291_0806), two transmembrane proteins (CDR20291_0807) and a solute-binding protein (CDR20291_0805).

The protein localises to the cell membrane. Probably part of an ABC transporter complex involved in tyrosine uptake. May also import phenylalanine. Probably responsible for the translocation of the substrate across the membrane. The protein is Tyrosine transport system permease protein of Clostridioides difficile (strain R20291) (Peptoclostridium difficile).